The following is a 96-amino-acid chain: Teretoxin Tgu6.1 (96 aa).

An N-terminal signal peptide occupies residues 1-16 (MRPFLVFVLIVSVSLA). Positions 17 to 52 (FSFEDMPNKGGDSVASITADQARGHKRNPLFPFAQR) are excised as a propeptide.

Post-translationally, contains 3 disulfide bonds. Expressed by the venom duct.

Its subcellular location is the secreted. The recombinant protein causes paralysis to polychaete worms (Nereis virens), the natural prey of terebrid snails. The protein is Teretoxin Tgu6.1 of Terebra guttata (White spotted auger snail).